Reading from the N-terminus, the 146-residue chain is Hemoglobin subunit beta (146 aa).

Residue V1 is modified to N-acetylvaline. The region spanning 2–146 (HLTDAEKAAI…VATALGHKYH (145 aa)) is the Globin domain. K59 is modified (N6-acetyllysine). H63 contributes to the heme b binding site. K82 bears the N6-acetyllysine mark. H92 is a heme b binding site. C93 is modified (S-nitrosocysteine). K144 is subject to N6-acetyllysine.

Belongs to the globin family. Heterotetramer of two alpha chains and two beta chains. Red blood cells.

In terms of biological role, involved in oxygen transport from the lung to the various peripheral tissues. In Ondatra zibethicus (Muskrat), this protein is Hemoglobin subunit beta (HBB).